The primary structure comprises 139 residues: Small ribosomal subunit protein uS11 (139 aa).

Residues 1–13 (MAKQAAKGSAAAT) show a composition bias toward low complexity. Residues 1 to 30 (MAKQAAKGSAAATKRQRGKRREKKNVPRGQ) are disordered. Over residues 14–23 (KRQRGKRREK) the composition is skewed to basic residues.

The protein belongs to the universal ribosomal protein uS11 family. In terms of assembly, part of the 30S ribosomal subunit. Interacts with proteins S7 and S18. Binds to IF-3.

Located on the platform of the 30S subunit, it bridges several disparate RNA helices of the 16S rRNA. Forms part of the Shine-Dalgarno cleft in the 70S ribosome. In Roseiflexus sp. (strain RS-1), this protein is Small ribosomal subunit protein uS11.